A 111-amino-acid polypeptide reads, in one-letter code: C-X-C motif chemokine 14 (111 aa).

Residues 1 to 34 form the signal peptide; the sequence is MSLLPRRAPPVSMRLLAAALLLLLLALYTARVDG. 2 disulfides stabilise this stretch: Cys37–Cys63 and Cys39–Cys84. The short motif at 67-81 is the D-box element; that stretch reads MVIITTKSVSRYRGQ.

The protein belongs to the intercrine alpha (chemokine CxC) family. Post-translationally, ubiquitinated, followed by degradation by the proteasome. In terms of tissue distribution, expressed in heart, brain, placenta, lung, liver, skeletal muscle, kidney and pancreas. Highly expressed in normal tissue without inflammatory stimuli and infrequently expressed in cancer cell lines. Weakly expressed in monocyte-derived dendritic cells. Not detected in lung or unstimulated peripheral blood lymphocytes.

The protein resides in the secreted. Its function is as follows. Potent chemoattractant for neutrophils, and weaker for dendritic cells. Not chemotactic for T-cells, B-cells, monocytes, natural killer cells or granulocytes. Does not inhibit proliferation of myeloid progenitors in colony formation assays. This is C-X-C motif chemokine 14 (CXCL14) from Homo sapiens (Human).